The primary structure comprises 27 residues: Truncated HBeAg protein (27 aa).

The protein is Truncated HBeAg protein (C) of Homo sapiens (Human).